Here is a 133-residue protein sequence, read N- to C-terminus: Basic phospholipase A2 beta-bungarotoxin A-AL2 chain (133 aa).

Residues 1–5 (FLLGA) form the signal peptide. A propeptide spanning residues 6–13 (ANIPPHPL) is cleaved from the precursor. Cystine bridges form between C40-C132, C42-C58, C57-C113, C64-C106, C74-C99, and C92-C104. 3 residues coordinate Ca(2+): Y41, G43, and G45. The active site involves H61. Ca(2+) is bound at residue D62. D107 is an active-site residue.

It belongs to the phospholipase A2 family. Group I subfamily. D49 sub-subfamily. In terms of assembly, heterodimer; disulfide-linked. The A chains have phospholipase A2 activity and the B chains show homology with the basic protease inhibitors. Ca(2+) serves as cofactor. Expressed by the venom gland.

The protein resides in the secreted. The enzyme catalyses a 1,2-diacyl-sn-glycero-3-phosphocholine + H2O = a 1-acyl-sn-glycero-3-phosphocholine + a fatty acid + H(+). In terms of biological role, snake venom phospholipase A2 (PLA2) that inhibits neuromuscular transmission by blocking acetylcholine release from the nerve termini. PLA2 catalyzes the calcium-dependent hydrolysis of the 2-acyl groups in 3-sn-phosphoglycerides. The protein is Basic phospholipase A2 beta-bungarotoxin A-AL2 chain of Bungarus multicinctus (Many-banded krait).